A 655-amino-acid chain; its full sequence is p-hydroxybenzoic acid efflux pump subunit AaeB (655 aa).

11 helical membrane-spanning segments follow: residues 13-33 (FAVK…HFQL), 38-58 (WAVL…GGEP), 67-89 (GFLR…IAMI), 93-112 (LLMI…ISSL), 121-141 (WGLA…EPLL), 152-172 (EIVI…PRSI), 370-390 (LFWL…IAVV), 407-427 (FIYG…VIIP), 431-451 (QSML…GIEV), 459-479 (MGAL…TFHF), and 482-502 (FLDS…VILL).

It belongs to the aromatic acid exporter ArAE (TC 2.A.85) family.

It is found in the cell inner membrane. Forms an efflux pump with AaeA. Could function as a metabolic relief valve, allowing to eliminate certain compounds when they accumulate to high levels in the cell. This chain is p-hydroxybenzoic acid efflux pump subunit AaeB, found in Escherichia coli O9:H4 (strain HS).